The following is a 234-amino-acid chain: Phosphoribosylaminoimidazole-succinocarboxamide synthase (234 aa).

Belongs to the SAICAR synthetase family.

The catalysed reaction is 5-amino-1-(5-phospho-D-ribosyl)imidazole-4-carboxylate + L-aspartate + ATP = (2S)-2-[5-amino-1-(5-phospho-beta-D-ribosyl)imidazole-4-carboxamido]succinate + ADP + phosphate + 2 H(+). It functions in the pathway purine metabolism; IMP biosynthesis via de novo pathway; 5-amino-1-(5-phospho-D-ribosyl)imidazole-4-carboxamide from 5-amino-1-(5-phospho-D-ribosyl)imidazole-4-carboxylate: step 1/2. This Streptococcus pyogenes serotype M18 (strain MGAS8232) protein is Phosphoribosylaminoimidazole-succinocarboxamide synthase.